The chain runs to 92 residues: Secreted RxLR effector protein 21 (92 aa).

The N-terminal stretch at 1-21 (MNLSTLLLTLACISQLHGGSA) is a signal peptide. Positions 30–33 (RQLR) match the RxLR motif.

Belongs to the RxLR effector family.

It localises to the secreted. The protein localises to the host nucleus. The protein resides in the host cytoplasm. Functionally, secreted effector that completely suppresses the host cell death induced by cell death-inducing proteins. This Plasmopara viticola (Downy mildew of grapevine) protein is Secreted RxLR effector protein 21.